A 430-amino-acid chain; its full sequence is Cytochrome c biogenesis protein CcsB (430 aa).

3 consecutive transmembrane segments (helical) span residues 14 to 34, 72 to 92, and 162 to 182; these read LRIA…GTAI, SSWF…CSWR, and AGPM…VWGS.

This sequence belongs to the Ccs1/CcsB family. In terms of assembly, may interact with CcsA.

The protein localises to the cellular thylakoid membrane. Required during biogenesis of c-type cytochromes (cytochrome c6 and cytochrome f) at the step of heme attachment. The protein is Cytochrome c biogenesis protein CcsB of Prochlorococcus marinus (strain MIT 9313).